The primary structure comprises 316 residues: Conjugated bile acid hydrolase (316 aa).

The Nucleophile role is filled by C2. 2 residues coordinate deoxycholate: C2 and R18. N81 contacts taurine.

The protein belongs to the peptidase C59 family.

The catalysed reaction is cholate + taurine = taurocholate + H2O. The enzyme catalyses taurodeoxycholate + H2O = deoxycholate + taurine. It catalyses the reaction taurochenodeoxycholate + H2O = chenodeoxycholate + taurine. It carries out the reaction glycocholate + H2O = cholate + glycine. It functions in the pathway lipid metabolism; bile acid biosynthesis. Its activity is regulated as follows. Glycocholate hydrolysis is inhibited by various previously identified BSH inhibitors, including KIO(3), NaHIO(3), NaIO(4), CuCl(2), menadione, riboflavin, gossypetin, and the antibiotics oxytetracycline, demeclocycline hydrochloride and methacycline hydrochloride. Its function is as follows. Bile salt hydrolase that catalyzes the deconjugation of glycine- and taurine-linked bile salts, which occurs naturally in the intestines of animals, releasing amino acid residues and deconjugated bile salts (bile acids). Can hydrolyze the amide bond in the bile salts taurocholate (TCA), taurodeoxycholate (TDCA), taurochenodeoxycholate (TCDCA), taurohyodeoxycholate (THDCA) and tauroursodeoxycholate (TUDCA). Oh et al. did not detect activity with the glycine-conjugated bile salts glycocholate (GCA), glycodeoxycholate (GDCA) and glycochenodeoxycholate (GCDCA). However, a later study shows activity toward glycocholate (GCA). This Lactobacillus acidophilus protein is Conjugated bile acid hydrolase.